A 69-amino-acid polypeptide reads, in one-letter code: Large ribosomal subunit protein bL28 (69 aa).

It belongs to the bacterial ribosomal protein bL28 family.

The chain is Large ribosomal subunit protein bL28 from Aquifex aeolicus (strain VF5).